Here is a 367-residue protein sequence, read N- to C-terminus: ABI gene family member 3 (367 aa).

A coiled-coil region spans residues 36–64 (CEDNYLQATDKRKALEETMAFTTQALASV). Positions 163–273 (LSRTGTLSRK…LEVSQPPLEA (111 aa)) are disordered. Over residues 206–225 (SAASSASSLASAGSAEGASG) the composition is skewed to low complexity. 2 positions are modified to phosphoserine: S216 and S219. Over residues 236–264 (ATPPPPPVAPVTPPPPPLSAEVFLPPPPL) the composition is skewed to pro residues. The region spanning 309 to 367 (SYLEKVVTLYPYTRQKDNELSFSEGTVICVTRRYSDGWCEGVSSEGTGFFPGNYVEPSC) is the SH3 domain. Phosphoserine is present on S343.

This sequence belongs to the ABI family. As to quaternary structure, may interact with PAK1 and PAK2. Probably interacts with TARSH.

The protein resides in the cytoplasm. Functionally, inhibits ectopic tumor cell metastasis of SRD cells. In vitro, reduces cell motility. This Mus musculus (Mouse) protein is ABI gene family member 3 (Abi3).